Here is a 156-residue protein sequence, read N- to C-terminus: MSRRHAAEKREVLPDPKFGNIVITKFMNSVMYAGKKSVAETIVYGALGLIEGKTKQDPLSVFVQALDNVMPTIEVRSRRVGGATYQVPVEVRSARRQALGIRWLITAARGRNEKTMTERLSAELLDASNNRGNAVKKREDVHKMAEANRAFSHYRW.

It belongs to the universal ribosomal protein uS7 family. As to quaternary structure, part of the 30S ribosomal subunit. Contacts proteins S9 and S11.

Functionally, one of the primary rRNA binding proteins, it binds directly to 16S rRNA where it nucleates assembly of the head domain of the 30S subunit. Is located at the subunit interface close to the decoding center, probably blocks exit of the E-site tRNA. This chain is Small ribosomal subunit protein uS7, found in Rhodopseudomonas palustris (strain BisA53).